The sequence spans 490 residues: Mitochondrial-processing peptidase subunit beta (490 aa).

A mitochondrion-targeting transit peptide spans 1 to 46; the sequence is MAAAAVARAVLFSAARRRLCGFTERLLIGGAAGRSLYFGGNRLRST. Residue histidine 102 coordinates Zn(2+). Glutamate 105 (proton acceptor) is an active-site residue. 2 residues coordinate Zn(2+): histidine 106 and glutamate 182.

It belongs to the peptidase M16 family. As to quaternary structure, heterodimer of PMPCA (alpha) and PMPCB (beta) subunits, forming the mitochondrial processing protease (MPP) in which PMPCA is involved in substrate recognition and binding and PMPCB is the catalytic subunit. The cofactor is Zn(2+).

The protein localises to the mitochondrion matrix. The catalysed reaction is Release of N-terminal transit peptides from precursor proteins imported into the mitochondrion, typically with Arg in position P2.. Its activity is regulated as follows. Binding to PMPCA is required for catalytic activity. In terms of biological role, catalytic subunit of the essential mitochondrial processing protease (MPP), which cleaves the mitochondrial sequence off newly imported precursors proteins. Preferentially, cleaves after an arginine at position P2. Required for PINK1 turnover by coupling PINK1 mitochondrial import and cleavage, which results in subsequent PINK1 proteolysis. The protein is Mitochondrial-processing peptidase subunit beta (PMPCB) of Bos taurus (Bovine).